The primary structure comprises 310 residues: Acetyl-coenzyme A carboxylase carboxyl transferase subunit beta (310 aa).

The region spanning 27 to 296 is the CoA carboxyltransferase N-terminal domain; sequence LWRKCPNCEA…QDRDAEPDDT (270 aa). Zn(2+) is bound by residues Cys-31, Cys-34, Cys-50, and Cys-53. The segment at 31–53 adopts a C4-type zinc-finger fold; that stretch reads CPNCEAVLYLPELERHQSVCPKC. A disordered region spans residues 282-310; the sequence is THQPHQDRDAEPDDTASQSTLDEFSQADH.

Belongs to the AccD/PCCB family. As to quaternary structure, acetyl-CoA carboxylase is a heterohexamer composed of biotin carboxyl carrier protein (AccB), biotin carboxylase (AccC) and two subunits each of ACCase subunit alpha (AccA) and ACCase subunit beta (AccD). Zn(2+) is required as a cofactor.

The protein resides in the cytoplasm. It catalyses the reaction N(6)-carboxybiotinyl-L-lysyl-[protein] + acetyl-CoA = N(6)-biotinyl-L-lysyl-[protein] + malonyl-CoA. Its pathway is lipid metabolism; malonyl-CoA biosynthesis; malonyl-CoA from acetyl-CoA: step 1/1. Component of the acetyl coenzyme A carboxylase (ACC) complex. Biotin carboxylase (BC) catalyzes the carboxylation of biotin on its carrier protein (BCCP) and then the CO(2) group is transferred by the transcarboxylase to acetyl-CoA to form malonyl-CoA. The polypeptide is Acetyl-coenzyme A carboxylase carboxyl transferase subunit beta (Chromohalobacter salexigens (strain ATCC BAA-138 / DSM 3043 / CIP 106854 / NCIMB 13768 / 1H11)).